The following is a 204-amino-acid chain: MSKILVLNDKFENSGELELPASYAEVNPHNLYLYVKSYLAGMRANTAHTKSRAYVSGGGKKPWRQKGRGGARAGSTRTNVWVGGAVAFGPTNEKNYFQKVNKKQKRLALECALAQKAEAGKLFAVDSLAVESGKTKDAAKIIEALNLRDALIVKDLLDDKTLLAFRNMANCYVVDASEVNAYLVSVFSSVIVEKAVLQTITKEG.

A disordered region spans residues 53-74; it reads AYVSGGGKKPWRQKGRGGARAG.

This sequence belongs to the universal ribosomal protein uL4 family. In terms of assembly, part of the 50S ribosomal subunit.

In terms of biological role, one of the primary rRNA binding proteins, this protein initially binds near the 5'-end of the 23S rRNA. It is important during the early stages of 50S assembly. It makes multiple contacts with different domains of the 23S rRNA in the assembled 50S subunit and ribosome. Its function is as follows. Forms part of the polypeptide exit tunnel. In Campylobacter curvus (strain 525.92), this protein is Large ribosomal subunit protein uL4.